We begin with the raw amino-acid sequence, 591 residues long: Peroxisome assembly protein 2 (591 aa).

The segment at 1 to 78 is disordered; the sequence is MSDSDPKPTA…TNIDTNNNTN (78 aa). The Peroxisomal matrix segment spans residues 1-148; it reads MSDSDPKPTA…TSREGTRPAF (148 aa). Positions 7 to 26 are enriched in low complexity; sequence KPTAAKGAAPTSIPNSTRNP. A compositionally biased stretch (pro residues) spans 27-54; sequence NPTPPNPNPNPNPISTPAPTPTATPSPP. The segment covering 55 to 78 has biased composition (low complexity); the sequence is IASSSNNGNNSTRSTNIDTNNNTN. The chain crosses the membrane as a helical span at residues 149–175; sequence RVGQVDAELLDEELVELLRGQVREALR. Over 176 to 196 the chain is Cytoplasmic; it reads YVGGGGGGGGGGGGGGVGSGV. The chain crosses the membrane as a helical span at residues 197 to 222; it reads AQDWEAEISLALRAVLFKLTVWDHDA. Topologically, residues 223-246 are peroxisomal matrix; it reads TYGAALQNLKYTDARRDGPALAPP. A helical membrane pass occupies residues 247 to 273; the sequence is SRWQKALYGLVTVGGRYLWAKWEDWLL. Residues 274–283 lie on the Cytoplasmic side of the membrane; that stretch reads EQDDGFEGPS. The helical transmembrane segment at 284-314 threads the bilayer; that stretch reads PRVKRLARWTSALSTLHASAALVSFLVFLLH. The Peroxisomal matrix segment spans residues 315-341; it reads GRYRTLLDRLLRMRLAPPTSQVSREVS. A helical transmembrane segment spans residues 342-365; the sequence is FEYLNRQLVWHAFTEFLLFVLPLV. Residues 366-591 lie on the Cytoplasmic side of the membrane; that stretch reads GINRWRRWLA…EDGLDEDPES (226 aa). Zn(2+) contacts are provided by Cys-408, Cys-411, Cys-449, Cys-451, Cys-454, Cys-457, Cys-472, and Cys-475. An RING-type; atypical zinc finger spans residues 408 to 475; sequence CAICYRDQNS…EGEGWPCLRC (68 aa). The disordered stretch occupies residues 512–591; the sequence is KAPSDHEEEE…EDGLDEDPES (80 aa). Acidic residues-rich tracts occupy residues 517-537 and 575-591; these read HEEEENEEEEEQQGELGENEG and SEDYEAEEDGLDEDPES.

This sequence belongs to the pex2/pex10/pex12 family. As to quaternary structure, component of the PEX2-PEX10-PEX12 retrotranslocation channel, composed of PEX2, PEX10 and PEX12.

It is found in the peroxisome membrane. The catalysed reaction is [E2 ubiquitin-conjugating enzyme]-S-ubiquitinyl-L-cysteine + [acceptor protein]-L-cysteine = [E2 ubiquitin-conjugating enzyme]-L-cysteine + [acceptor protein]-S-ubiquitinyl-L-cysteine.. It functions in the pathway protein modification; protein ubiquitination. In terms of biological role, E3 ubiquitin-protein ligase component of a retrotranslocation channel required for peroxisome organization by mediating export of the PEX5 receptor from peroxisomes to the cytosol, thereby promoting PEX5 recycling. The retrotranslocation channel is composed of PEX2, PEX10 and PEX12; each subunit contributing transmembrane segments that coassemble into an open channel that specifically allows the passage of PEX5 through the peroxisomal membrane. PEX2 also regulates peroxisome organization by acting as a E3 ubiquitin-protein ligase. PEX2 ubiquitinates PEX5 during its passage through the retrotranslocation channel: catalyzes monoubiquitination of PEX5 at 'Cys-6', a modification that acts as a signal for PEX5 extraction into the cytosol. The sequence is that of Peroxisome assembly protein 2 from Thermothelomyces thermophilus (strain ATCC 42464 / BCRC 31852 / DSM 1799) (Sporotrichum thermophile).